The primary structure comprises 901 residues: Pyruvate, phosphate dikinase (901 aa).

An N-terminal region spans residues methionine 1–alanine 321. Residues lysine 322 to valine 380 form a linker 1 region. The segment at proline 381 to leucine 482 is central. Serine 440 carries the post-translational modification Phosphoserine; by PDRP1. The active-site Tele-phosphohistidine intermediate is histidine 442. The linker 2 stretch occupies residues asparagine 483–serine 522. Positions phenylalanine 523–arginine 901 are C-terminal. Substrate-binding residues include arginine 550, arginine 606, glutamate 750, glycine 771, threonine 772, asparagine 773, and aspartate 774. Mg(2+) is bound at residue glutamate 750. Mg(2+) is bound at residue aspartate 774. Residue cysteine 835 is the Proton donor of the active site. A disordered region spans residues glutamate 879–arginine 901.

It belongs to the PEP-utilizing enzyme family. As to quaternary structure, homodimer. Mg(2+) is required as a cofactor. Phosphorylation of Ser-440 in the dark inactivates the enzyme. Dephosphorylation upon light stimulation reactivates the enzyme.

It catalyses the reaction pyruvate + phosphate + ATP = phosphoenolpyruvate + AMP + diphosphate + H(+). Its activity is regulated as follows. Activated by light-induced dephosphorylation. Inhibited by dark-induced phosphorylation. Both reactions are catalyzed by PDRP1. In terms of biological role, catalyzes the reversible phosphorylation of pyruvate and phosphate. The sequence is that of Pyruvate, phosphate dikinase (ppdK) from Treponema pallidum (strain Nichols).